The following is a 1385-amino-acid chain: Pesticidal crystal protein Cry5Aa (1385 aa).

Disordered stretches follow at residues 768–799 (NITVQSNNPPQPSNNGGGDGGGNGGGDGGQYN) and 1359–1385 (PLPTDDQNSEGNTASSTNSDTSMNNNQ). Residues 782–796 (NGGGDGGGNGGGDGG) show a composition bias toward gly residues. Low complexity predominate over residues 1370 to 1385 (NTASSTNSDTSMNNNQ).

This sequence belongs to the delta endotoxin family.

In terms of biological role, endotoxin with nematicidal activity. The sequence is that of Pesticidal crystal protein Cry5Aa (cry5Aa) from Bacillus thuringiensis subsp. darmstadiensis.